The chain runs to 473 residues: Photosystem II CP43 reaction center protein (473 aa).

Positions 1–14 (MKTLYSLRRFYPVE) are excised as a propeptide. The residue at position 15 (Thr15) is an N-acetylthreonine. Position 15 is a phosphothreonine (Thr15). 5 helical membrane-spanning segments follow: residues 69-93 (LFEV…PHLA), 134-155 (LLGP…KDRN), 178-200 (KALY…RKIT), 255-275 (KPFA…LSYS), and 291-312 (WFNN…ASQA). Glu367 lines the [CaMn4O5] cluster pocket. Residues 447–471 (RARAAAAGFEKGIDRDFEPVLSMTP) form a helical membrane-spanning segment.

This sequence belongs to the PsbB/PsbC family. PsbC subfamily. PSII is composed of 1 copy each of membrane proteins PsbA, PsbB, PsbC, PsbD, PsbE, PsbF, PsbH, PsbI, PsbJ, PsbK, PsbL, PsbM, PsbT, PsbX, PsbY, PsbZ, Psb30/Ycf12, at least 3 peripheral proteins of the oxygen-evolving complex and a large number of cofactors. It forms dimeric complexes. Requires Binds multiple chlorophylls and provides some of the ligands for the Ca-4Mn-5O cluster of the oxygen-evolving complex. It may also provide a ligand for a Cl- that is required for oxygen evolution. PSII binds additional chlorophylls, carotenoids and specific lipids. as cofactor.

The protein localises to the plastid. It localises to the chloroplast thylakoid membrane. Functionally, one of the components of the core complex of photosystem II (PSII). It binds chlorophyll and helps catalyze the primary light-induced photochemical processes of PSII. PSII is a light-driven water:plastoquinone oxidoreductase, using light energy to abstract electrons from H(2)O, generating O(2) and a proton gradient subsequently used for ATP formation. The polypeptide is Photosystem II CP43 reaction center protein (Calycanthus floridus var. glaucus (Eastern sweetshrub)).